The chain runs to 763 residues: Phospholipid phosphatase-related protein type 4 (763 aa).

Residues 33-54 (VHTSPGGGRRPGQAAGMSAKER) are disordered. Position 36 is a phosphoserine (S36). Transmembrane regions (helical) follow at residues 67 to 87 (LPCF…SLYF), 119 to 139 (AIPF…TIMV), and 178 to 198 (FVGV…IIQL). N-linked (GlcNAc...) asparagine glycans are attached at residues N214 and N219. Residues 247–267 (SFPSQHATLAAFAAVYVSMYF) form a helical membrane-spanning segment. The N-linked (GlcNAc...) asparagine glycan is linked to N268. A run of 2 helical transmembrane segments spans residues 276 to 296 (KLLK…CGLT) and 308 to 328 (VYCG…YAVG). Position 346 is a phosphoserine (S346). N362 carries an N-linked (GlcNAc...) asparagine glycan. Phosphoserine is present on S385. An N-linked (GlcNAc...) asparagine glycan is attached at N432. S438 carries the phosphoserine modification. A glycan (N-linked (GlcNAc...) asparagine) is linked at N455. The tract at residues 458-529 (RKLSLQVIEP…PRVSIQSRPG (72 aa)) is disordered. Phosphoserine is present on residues S461 and S472. N-linked (GlcNAc...) asparagine glycosylation is found at N513, N543, and N568. S606 bears the Phosphoserine mark. Basic and acidic residues predominate over residues 669–694 (DSESCESLKDSFGSGDRKRSNIDSNE). 2 disordered regions span residues 669–698 (DSES…HHHH) and 739–763 (ERSN…AYKD). Residues 740–749 (RSNSPENTRN) are compositionally biased toward polar residues.

This sequence belongs to the PA-phosphatase related phosphoesterase family. In terms of processing, O-glycosylated. Probably at Ser-346. Expressed by glutamatergic neurons (at protein level).

The protein localises to the postsynaptic density membrane. Functionally, postsynaptic density membrane protein that indirectly regulates glutamatergic synaptic transmission through lysophosphatidic acid (LPA)-mediated signaling pathways. Binds lysophosphatidic acid (LPA) and mediates its internalization into cells. Could act as receptor or a transporter of this lipid at the post-synaptic membrane. Modulates lysophosphatidic acid (LPA) activity in neuron axonal outgrowth during development by attenuating phospholipid-induced axon collapse. The polypeptide is Phospholipid phosphatase-related protein type 4 (Homo sapiens (Human)).